Reading from the N-terminus, the 92-residue chain is UPF0250 protein VV0902 (92 aa).

This sequence belongs to the UPF0250 family.

The protein is UPF0250 protein VV0902 of Vibrio vulnificus (strain YJ016).